A 126-amino-acid polypeptide reads, in one-letter code: Glycine cleavage system H protein (126 aa).

Residues 21–103 (TVTVGISDHA…YESGWIARIK (83 aa)) form the Lipoyl-binding domain. Lys-62 carries the N6-lipoyllysine modification.

The protein belongs to the GcvH family. As to quaternary structure, the glycine cleavage system is composed of four proteins: P, T, L and H. Requires (R)-lipoate as cofactor.

In terms of biological role, the glycine cleavage system catalyzes the degradation of glycine. The H protein shuttles the methylamine group of glycine from the P protein to the T protein. The sequence is that of Glycine cleavage system H protein from Aliivibrio fischeri (strain MJ11) (Vibrio fischeri).